The following is a 374-amino-acid chain: tRNA-specific 2-thiouridylase MnmA (374 aa).

ATP-binding positions include 13–20 (GMSGGVDS) and Met-39. The segment at 99–101 (NPD) is interaction with target base in tRNA. Cys-104 (nucleophile) is an active-site residue. Cys-104 and Cys-201 are disulfide-bonded. Residue Gly-128 coordinates ATP. Positions 151 to 153 (KDQ) are interaction with tRNA. The active-site Cysteine persulfide intermediate is Cys-201. The tract at residues 313–314 (RY) is interaction with tRNA.

It belongs to the MnmA/TRMU family.

It localises to the cytoplasm. It catalyses the reaction S-sulfanyl-L-cysteinyl-[protein] + uridine(34) in tRNA + AH2 + ATP = 2-thiouridine(34) in tRNA + L-cysteinyl-[protein] + A + AMP + diphosphate + H(+). Functionally, catalyzes the 2-thiolation of uridine at the wobble position (U34) of tRNA, leading to the formation of s(2)U34. This Streptococcus suis (strain 98HAH33) protein is tRNA-specific 2-thiouridylase MnmA.